The primary structure comprises 368 residues: DNA replication and repair protein RecF (368 aa).

Residue 30–37 (GDNGAGKT) participates in ATP binding.

The protein belongs to the RecF family.

The protein localises to the cytoplasm. Functionally, the RecF protein is involved in DNA metabolism; it is required for DNA replication and normal SOS inducibility. RecF binds preferentially to single-stranded, linear DNA. It also seems to bind ATP. The sequence is that of DNA replication and repair protein RecF from Xanthomonas campestris pv. campestris (strain 8004).